Reading from the N-terminus, the 931-residue chain is Protein translocase subunit SecA (931 aa).

ATP contacts are provided by residues Gln-87, 105-109, and Asp-515; that span reads GEGKT. Zn(2+) is bound by residues Cys-915, Cys-917, Cys-926, and His-927.

The protein belongs to the SecA family. As to quaternary structure, monomer and homodimer. Part of the essential Sec protein translocation apparatus which comprises SecA, SecYEG and auxiliary proteins SecDF-YajC and YidC. It depends on Zn(2+) as a cofactor.

Its subcellular location is the cell inner membrane. The protein resides in the cytoplasm. The catalysed reaction is ATP + H2O + cellular proteinSide 1 = ADP + phosphate + cellular proteinSide 2.. In terms of biological role, part of the Sec protein translocase complex. Interacts with the SecYEG preprotein conducting channel. Has a central role in coupling the hydrolysis of ATP to the transfer of proteins into and across the cell membrane, serving both as a receptor for the preprotein-SecB complex and as an ATP-driven molecular motor driving the stepwise translocation of polypeptide chains across the membrane. The chain is Protein translocase subunit SecA from Burkholderia ambifaria (strain ATCC BAA-244 / DSM 16087 / CCUG 44356 / LMG 19182 / AMMD) (Burkholderia cepacia (strain AMMD)).